A 104-amino-acid polypeptide reads, in one-letter code: Large ribosomal subunit protein uL24 (104 aa).

The protein belongs to the universal ribosomal protein uL24 family. In terms of assembly, part of the 50S ribosomal subunit.

In terms of biological role, one of two assembly initiator proteins, it binds directly to the 5'-end of the 23S rRNA, where it nucleates assembly of the 50S subunit. Its function is as follows. One of the proteins that surrounds the polypeptide exit tunnel on the outside of the subunit. The protein is Large ribosomal subunit protein uL24 of Yersinia pseudotuberculosis serotype O:1b (strain IP 31758).